The chain runs to 247 residues: Cell division protein ZapD (247 aa).

The protein belongs to the ZapD family. In terms of assembly, interacts with FtsZ.

It is found in the cytoplasm. Cell division factor that enhances FtsZ-ring assembly. Directly interacts with FtsZ and promotes bundling of FtsZ protofilaments, with a reduction in FtsZ GTPase activity. The sequence is that of Cell division protein ZapD from Klebsiella pneumoniae (strain 342).